The sequence spans 134 residues: Cytochrome c-550 (134 aa).

Glutamine 1 carries the pyrrolidone carboxylic acid modification. The heme c site is built by cysteine 15, cysteine 18, histidine 19, and methionine 100.

Binds 1 heme c group covalently per subunit.

In terms of biological role, electron donor for nitrous-oxide reductase. The protein is Cytochrome c-550 of Paracoccus pantotrophus (Thiosphaera pantotropha).